The following is a 269-amino-acid chain: Microtubule-associated protein RP/EB family member 1 (269 aa).

The region spanning 14-116 (NLSRHDMLAW…FVQWFKKFFD (103 aa)) is the Calponin-homology (CH) domain. The interval 168–190 (RTAVSNKPPAQGISKKPATVGNG) is disordered. The EB1 C-terminal domain occupies 186 to 256 (TVGNGDDESA…LYATDEGFVI (71 aa)).

The protein belongs to the MAPRE family.

The protein resides in the cytoplasm. It is found in the cytoskeleton. The protein localises to the microtubule organizing center. It localises to the centrosome. Its subcellular location is the golgi apparatus. The protein resides in the spindle. It is found in the spindle pole. In terms of biological role, plus-end tracking protein (+TIP) that binds to the plus-end of microtubules and regulates the dynamics of the microtubule cytoskeleton. Promotes cytoplasmic microtubule nucleation and elongation. Involved in mitotic spindle positioning by stabilizing microtubules and promoting dynamic connection between astral microtubules and the cortex during mitotic chromosome segregation. In Xenopus tropicalis (Western clawed frog), this protein is Microtubule-associated protein RP/EB family member 1 (mapre1).